Reading from the N-terminus, the 546-residue chain is MELISSSTIGNSALCLTLISILIFFFLTTTTIPTFPDHPLRSLLDDSQITTNSSSIVNPKSSCVSSRSHDNGGVINYFSLHYCIFNENLFFSIPILSLLILLHFYILIKTAQTHFSTVTTKLADRLNLSPSMAAVTLLALGNGAPDVFASVAALRGGQYRTGFGAILSAGTFVSAFVVGFVAIYAAPFPVDAASFVRDVLFYLIAALFLFYVYLSGEIFVWQAIGFVGFYIFFVGFVFWMDFGTNVEKGKSISEEEKDLLRLQDCEIAAGSLGSYKAEKEHQFSGIFRLYGTISRMWETPVSVLLNLTIPKPSPSEWSRFYRSANIVFCPFALLYTCNSFVQLNHPISFLFPNTHLPLWLVVLFMTSSLAFLHFTVEKQPPKTEQLPVIVVAFIMSVFWISTIAGELLNCLAALGTLLKLPPALLGLTVLAWGNSVGDLVADVAVAKAGRPAMAMAGCFAGPMFNMLVGLGSALVMQTANVYPDAYKLGFHVGIVIAFVFLLLSLMGSLLVITWSRFRVPRFWGICLVGLYVAFTFVSLIIASVST.

13 helical membrane passes run 13 to 33, 88 to 108, 134 to 154, 163 to 183, 194 to 214, 218 to 238, 323 to 343, 356 to 376, 388 to 408, 423 to 445, 455 to 475, 492 to 512, and 522 to 542; these read ALCL…TTIP, NLFF…YILI, AVTL…VAAL, FGAI…FVAI, SFVR…YVYL, IFVW…GFVF, SANI…FVQL, LPLW…HFTV, VIVV…GELL, ALLG…DVAV, MAGC…SALV, VGIV…LLVI, and FWGI…LIIA.

This sequence belongs to the Ca(2+):cation antiporter (CaCA) (TC 2.A.19) family. Cation/calcium exchanger (CCX) subfamily.

Its subcellular location is the cell membrane. Its function is as follows. Membrane-localized H(+)-dependent K(+) and Na(+) transporter. This chain is Cation/calcium exchanger 5 (CCX5), found in Arabidopsis thaliana (Mouse-ear cress).